Reading from the N-terminus, the 797-residue chain is N-acetylneuraminate (7)9-O-acetyltransferase (797 aa).

The Cytoplasmic segment spans residues 1–18 (MAALAYNLGKREINHYFS). The helical transmembrane segment at 19–39 (VRSAKVLALVAVLLLAACHLA) threads the bilayer. Over 40 to 313 (SRRYRGNDSC…QPRPPLTLIQ (274 aa)) the chain is Lumenal. N-linked (GlcNAc...) asparagine glycosylation is present at Asn46. Ser94 acts as the Acyl-ester intermediate in catalysis. Residues Asn175 and Asn187 are each glycosylated (N-linked (GlcNAc...) asparagine). Residues Asp270 and His273 contribute to the active site. The helical transmembrane segment at 314 to 334 (KLAACFFTLSIIGYFIFYVIH) threads the bilayer. Over 335–363 (RNAHRKNKPCTDLESGEEKKNIINTPVSS) the chain is Cytoplasmic. The helical transmembrane segment at 364-384 (LEILLQSFCKLGLIMAYFYMC) threads the bilayer. The Lumenal segment spans residues 385–395 (DRANLFMKENK). The helical transmembrane segment at 396-416 (FYTHSSFFIPIIYILVLGVFY) threads the bilayer. The Cytoplasmic portion of the chain corresponds to 417–439 (NENTKETKVLNREQTDEWKGWMQ). Residues 440–460 (LVILIYHISGASTFLPVYMHI) traverse the membrane as a helical segment. A topological domain (lumenal) is located at residue Arg461. The helical transmembrane segment at 462 to 482 (VLVAAYLFQTGYGHFSYFWIK) threads the bilayer. Topologically, residues 483 to 486 (GDFG) are cytoplasmic. Residues 487–507 (IHRVCQVLFRLNFLVVVLCIV) form a helical membrane-spanning segment. The Lumenal segment spans residues 508–513 (MDRPYQ). Residues 514–534 (FYYFVPLVTVWFMVIYVTLAL) traverse the membrane as a helical segment. The Cytoplasmic segment spans residues 535-546 (WPQITQKKANGN). The helical transmembrane segment at 547 to 567 (FFWYLGLLLKLGLLLLCIWFL) threads the bilayer. Residues 568 to 599 (AYSQGAFEKIFSLWPLSKCFELEGSVYEWWFR) lie on the Lumenal side of the membrane. The chain crosses the membrane as a helical span at residues 600–620 (WRLDRYVVFHGVLFAFIYLAL). Residues 621 to 638 (QRRQILSEGKGEPLFSNK) are Cytoplasmic-facing. The helical transmembrane segment at 639-659 (ISNFLLFVSVVSFLTYSIWAS) threads the bilayer. The Lumenal segment spans residues 660–671 (SCKNKAECNELH). Residues 672-692 (PSVSVVQIVAFILIRNIPGYA) traverse the membrane as a helical segment. Residues 693-698 (RSIYSS) lie on the Cytoplasmic side of the membrane. The helical transmembrane segment at 699–719 (FFAWFGKISLELFICQYHIWL) threads the bilayer. Residues 720 to 725 (AADTRG) lie on the Lumenal side of the membrane. Residues 726-746 (ILVLIPGNPTLNIIVSTFIFV) traverse the membrane as a helical segment. The Cytoplasmic segment spans residues 747–770 (CVAHEISQITTDLAQVVIPKDNPS). A helical transmembrane segment spans residues 771–791 (LFRRLACTIAFFGGVLILSSI). The Lumenal segment spans residues 792-797 (QDKSRL).

Belongs to the PC-esterase family. CASD1 subfamily. Post-translationally, N-glycosylated. Ubiquitously expressed.

It localises to the golgi apparatus membrane. The catalysed reaction is CMP-N-acetyl-beta-neuraminate + acetyl-CoA = CMP-N-acetyl-9-O-acetyl-beta-neuraminate + CoA. It catalyses the reaction a ganglioside GD3 (d18:1(4E)) + acetyl-CoA = a ganglioside Ac-O-7-GD3(d18:1(4E)) + CoA. The enzyme catalyses CMP-N-acetyl-beta-neuraminate + acetyl-CoA = CMP-N-acetyl-7-O-acetyl-beta-neuraminate + CoA. Functionally, key enzyme in the biosynthesis of O-acetylated (O-Ac) sialoglycans such as gangliosides O-AcGD3 and O-AcGD2, which affect various processes such as cell-cell interactions, host-pathogen recognition. Catalyzes the transfer of an acetyl group from a donor, the acetyl-coenzyme-A molecule (acetyl-CoA), to the C7/8/9 OH-position of a sialic acid residue. The primary site of O-acetyl group transfer on sialic acid seems to depend on cell type and can be C7, from which the O-acetyl group could subsequently migrate to the C8 and then to the C9 position, or at C9 with possibility of migrating to the C8 and then to the C7 position. Together with ST8SIA1 (GD3 synthase) it increases the levels of ganglioside Ac-O-7-GD3. Can transfer the acetyl group from acetyl-CoA to free sialate (N-acetylneuraminate, Neu5Ac) in vitro, but has preferred substrate specificity for CMP-activated sialate (CMP-Neu5Ac), resulting in the formation of 9-O-acetylated CMP-Neu5Ac (CMP-Neu5,9Ac2). CMP-Neu5,9Ac2 may be used by sialyltransferases as a sialate donor for glycoconjugate acceptors such as ganglioside GD3. O-acetylation at position C9 of ganglioside GD3 can counteract the pro-apoptotic effects of the ganglioside GD3 in tumor cells. In Mus musculus (Mouse), this protein is N-acetylneuraminate (7)9-O-acetyltransferase.